The chain runs to 68 residues: MTKQSIVIVLFAAIAMMACLQRVTAEPAPEPIAAPIAEPYANPEAIASPEAKDLHTVVSAILQALGKK.

An N-terminal signal peptide occupies residues 1–25 (MTKQSIVIVLFAAIAMMACLQRVTA). AXPX repeat units follow at residues 25-28 (AEPA), 33-36 (AAPI), 37-40 (AEPY), 41-44 (ANPE), and 47-50 (ASPE). Positions 26-51 (EPAPEPIAAPIAEPYANPEAIASPEA) are excised as a propeptide. Position 65 is a leucine amide (Leu-65).

In terms of tissue distribution, expressed by the venom gland.

It is found in the secreted. Its subcellular location is the target cell membrane. Antimicrobial peptide with strong activity against the fungi B.cinerea (MIC=5 uM) and C.albicans (MIC=33 uM), and no activity against the Gram-negative bacterium E.coli (MIC&gt;200 uM) and the Gram-positive bacterium S.aureus (MIC&gt;200 uM). Shows cytolytic activity against insect cell lines. Has no hemolytic activity against human erythrocytes. In vivo, peptide injection in the vicinity of the head and thorax of lepidopteran larvae induces feeding disorder that lasts one or two days before recovering. This is Venom peptide 3 from Orancistrocerus drewseni (Solitary wasp).